The following is a 1226-amino-acid chain: Chitin synthase IV (1226 aa).

Positions 1–205 are disordered; that stretch reads MSLPERPGGS…SRKNPATAEQ (205 aa). A compositionally biased stretch (polar residues) spans 49–65; that stretch reads SVSSYAETISNPHANTE. Over residues 66 to 75 the composition is skewed to low complexity; it reads TLPLSPTHPT. A compositionally biased stretch (basic and acidic residues) spans 94 to 107; sequence IRPERNRIDKDHRN. Residues 134–151 are compositionally biased toward polar residues; sequence DVSTEPSGGSQTHGSFAD. Positions 163-172 are enriched in basic and acidic residues; sequence MSGDDQEKGN. Residues 173–198 show a composition bias toward basic residues; the sequence is TRVKSRPRRSKSGKITKETRHRKSRK. A helical membrane pass occupies residues 246 to 266; the sequence is MGLISIILVIMAIVGFLTFGF. Asn-381, Asn-421, and Asn-443 each carry an N-linked (GlcNAc...) asparagine glycan. The helical transmembrane segment at 516–536 threads the bilayer; the sequence is ILILSVVGTRFVLALIFQWFI. The tract at residues 572–671 is disordered; sequence LPGDVGSSAM…PGPAGFIHDS (100 aa). Composition is skewed to polar residues over residues 580–601 and 618–643; these read AMGS…TSRF and TTMS…NDSR. A glycan (N-linked (GlcNAc...) asparagine) is linked at Asn-640. A compositionally biased stretch (low complexity) spans 649-666; it reads PDPYSSAASPSDGPGPAG. N-linked (GlcNAc...) asparagine glycans are attached at residues Asn-787 and Asn-1035. The next 3 helical transmembrane spans lie at 1060–1080, 1094–1114, and 1118–1138; these read FVVF…AFTF, IIPL…ILVT, and WSYV…NFVL.

The protein belongs to the chitin synthase family. Class IV subfamily. As to expression, highly expressed in conidia.

The protein resides in the cell membrane. The catalysed reaction is [(1-&gt;4)-N-acetyl-beta-D-glucosaminyl](n) + UDP-N-acetyl-alpha-D-glucosamine = [(1-&gt;4)-N-acetyl-beta-D-glucosaminyl](n+1) + UDP + H(+). Polymerizes chitin, a structural polymer of the cell wall and septum, by transferring the sugar moiety of UDP-GlcNAc to the non-reducing end of the growing chitin polymer. Contributes to the production of conidia and the ability of fungal conidia to germinate. Involved in fungal stress tolerances. This chain is Chitin synthase IV, found in Metarhizium acridum (strain CQMa 102).